The primary structure comprises 343 residues: Zinc finger CCCH domain-containing protein 39 (343 aa).

A coiled-coil region spans residues 114-147 (LSHLADAADEAAALRQENAELRVANNDLACRIAK). 2 consecutive C3H1-type zinc fingers follow at residues 268–296 (MFKT…HGVA) and 306–334 (RYKT…HSIT).

The chain is Zinc finger CCCH domain-containing protein 39 from Oryza sativa subsp. japonica (Rice).